The sequence spans 1935 residues: Myosin-7 (1935 aa).

Positions 32–81 constitute a Myosin N-terminal SH3-like domain; that stretch reads DLKKDVFVPDDKEEFVKATILSREGGKVTAETEHGKTVTVKEDQVLQQNP. Residues 85–778 form the Myosin motor domain; sequence DKIEDMAMLT…LLGLLEEMRD (694 aa). At Lys-129 the chain carries N6,N6,N6-trimethyllysine. 178–185 is a binding site for ATP; sequence GESGAGKT. Thr-378 bears the Phosphothreonine mark. Actin-binding regions lie at residues 655-677 and 757-771; these read LNKLMTNLRSTHPHFVRCIIPNE and KFGHTKVFFKAGLLG. Positions 781–810 constitute an IQ domain; that stretch reads LSRIITRIQAQSRGVLSRMEFKKLLERRDS. Residues 839 to 1935 adopt a coiled-coil conformation; that stretch reads LLKSAETEKE…DIGTKGLNEE (1097 aa). 2 positions are modified to phosphoserine: Ser-1137 and Ser-1269. Thr-1282 carries the phosphothreonine modification. Tyr-1308 carries the post-translational modification Phosphotyrosine. A Phosphothreonine modification is found at Thr-1309. Phosphoserine is present on Ser-1510. The residue at position 1513 (Thr-1513) is a Phosphothreonine. The tract at residues 1907 to 1935 is disordered; it reads EERADIAESQVNKLRAKSRDIGTKGLNEE. Residues 1923-1935 show a composition bias toward basic and acidic residues; that stretch reads KSRDIGTKGLNEE.

Belongs to the TRAFAC class myosin-kinesin ATPase superfamily. Myosin family. As to quaternary structure, muscle myosin is a hexameric protein that consists of 2 heavy chain subunits (MHC), 2 alkali light chain subunits (MLC) and 2 regulatory light chain subunits (MLC-2). Interacts with ECPAS. Interacts (via C-terminus) with LRRC39.

It is found in the cytoplasm. It localises to the myofibril. The protein resides in the sarcomere. Its function is as follows. Myosins are actin-based motor molecules with ATPase activity essential for muscle contraction. Forms regular bipolar thick filaments that, together with actin thin filaments, constitute the fundamental contractile unit of skeletal and cardiac muscle. In Bos taurus (Bovine), this protein is Myosin-7 (MYH7).